The following is a 148-amino-acid chain: UPF0756 membrane protein CKO_01811 (148 aa).

The next 4 helical transmembrane spans lie at 14–34 (ALGFISHNTTVAVSILVLIIV), 51–71 (LTVGIIILTIGVMAPIASGSL), 86–106 (LVAIAIGVFVSWLGGRGVTLM), and 121–141 (VLGVALFRGVPVGPLIAAGLV).

This sequence belongs to the UPF0756 family.

Its subcellular location is the cell membrane. The chain is UPF0756 membrane protein CKO_01811 from Citrobacter koseri (strain ATCC BAA-895 / CDC 4225-83 / SGSC4696).